Reading from the N-terminus, the 175-residue chain is Small ribosomal subunit protein uS9 (175 aa).

The protein belongs to the universal ribosomal protein uS9 family.

This Streptomyces griseus subsp. griseus (strain JCM 4626 / CBS 651.72 / NBRC 13350 / KCC S-0626 / ISP 5235) protein is Small ribosomal subunit protein uS9.